The sequence spans 292 residues: Phosphatidylglycerol--prolipoprotein diacylglyceryl transferase (292 aa).

Transmembrane regions (helical) follow at residues 21–41 (VSLH…MWLA), 60–80 (LLYA…VLFY), 98–118 (GGMS…VFAH), 124–144 (FFQV…AGRL), 198–218 (SQLY…NLFI), 225–245 (GAVS…VEFF), and 258–278 (ISMG…MMIW). Arg-143 contacts a 1,2-diacyl-sn-glycero-3-phospho-(1'-sn-glycerol).

Belongs to the Lgt family.

The protein localises to the cell inner membrane. It catalyses the reaction L-cysteinyl-[prolipoprotein] + a 1,2-diacyl-sn-glycero-3-phospho-(1'-sn-glycerol) = an S-1,2-diacyl-sn-glyceryl-L-cysteinyl-[prolipoprotein] + sn-glycerol 1-phosphate + H(+). It functions in the pathway protein modification; lipoprotein biosynthesis (diacylglyceryl transfer). Its function is as follows. Catalyzes the transfer of the diacylglyceryl group from phosphatidylglycerol to the sulfhydryl group of the N-terminal cysteine of a prolipoprotein, the first step in the formation of mature lipoproteins. This chain is Phosphatidylglycerol--prolipoprotein diacylglyceryl transferase, found in Erwinia tasmaniensis (strain DSM 17950 / CFBP 7177 / CIP 109463 / NCPPB 4357 / Et1/99).